The primary structure comprises 981 residues: Anoctamin-3 (981 aa).

Polar residues predominate over residues 1–28 (MVHHSGSIQSFKQQKGMNISKSEITTEA). Disordered regions lie at residues 1 to 32 (MVHH…SLKP) and 67 to 87 (PTSV…EESR). The Cytoplasmic portion of the chain corresponds to 1 to 403 (MVHHSGSIQS…LYFAWLGWYT (403 aa)). Positions 76 to 87 (DKPEHVTSEESR) are enriched in basic and acidic residues. A helical membrane pass occupies residues 404-424 (GMLIPAAVVGLCVFFYGLVTM). Asparagine 425, asparagine 448, and asparagine 455 each carry an N-linked (GlcNAc...) asparagine glycan. Residues 425-469 (NESQVSQEICKATEVFMCPLCDKNCSLQRLNDSCIYAKVTYLFDN) are Extracellular-facing. A helical membrane pass occupies residues 470–490 (GGTVFFAIFMAIWATVFLEFW). Residues 491–550 (KRRRSILTYTWDLIEWEEEEETLRPQFEAKYYRMEVINPITGKPEPHQPSSDKVTRLLVS) lie on the Cytoplasmic side of the membrane. Residues 551–571 (VSGIFFMISLVITAVFAVVVY) form a helical membrane-spanning segment. Over 572 to 592 (RLVVMEQFASFKWNFVKQHWQ) the chain is Extracellular. Residues 593–613 (FATSGAAVCINFIIIMLLNLA) traverse the membrane as a helical segment. Topologically, residues 614–640 (YEKIAYLLTNLEYPRTESEWENSFALK) are cytoplasmic. Residues 641–661 (MFLFQFVNLNSSIFYIAFFLG) form a helical membrane-spanning segment. Residues 662–761 (RFVGHPGKYN…MDEYLEMVLQ (100 aa)) lie on the Extracellular side of the membrane. A helical transmembrane segment spans residues 762-782 (FGFTTIFVAAFPLAPLLALLN). The Cytoplasmic segment spans residues 783-810 (NIIEIRLDAYKFVTQWRRPLPARATDIG). The helical transmembrane segment at 811-831 (IWLGILEGIGILAVITNAFVI) threads the bilayer. Residues 832 to 914 (AITSDYIPRF…QYWHILAARL (83 aa)) lie on the Extracellular side of the membrane. A glycan (N-linked (GlcNAc...) asparagine) is linked at asparagine 866. Residues 915 to 935 (AFIIVFEHLVFGIKSFIAYLI) form a helical membrane-spanning segment. Over 936-981 (PDIPKGLRERIRREKYLVQEMMYEAELEHLQQQRRKSGQPIHHEWP) the chain is Cytoplasmic.

This sequence belongs to the anoctamin family. In terms of assembly, interacts with KCNT1/Slack. As to expression, predominantly expressed in neuronal tissues. Expressed in brain.

It localises to the cell membrane. It carries out the reaction a 1,2-diacyl-sn-glycero-3-phosphocholine(in) = a 1,2-diacyl-sn-glycero-3-phosphocholine(out). It catalyses the reaction a beta-D-galactosyl-(1&lt;-&gt;1')-N-acylsphing-4-enine(out) = a beta-D-galactosyl-(1&lt;-&gt;1')-N-acylsphing-4-enine(in). In terms of biological role, has calcium-dependent phospholipid scramblase activity; scrambles phosphatidylcholine and galactosylceramide. Does not exhibit calcium-activated chloride channel (CaCC) activity. Seems to act as potassium channel regulator and may inhibit pain signaling; can facilitate KCNT1/Slack channel activity by promoting its full single-channel conductance at very low sodium concentrations and by increasing its sodium sensitivity. This chain is Anoctamin-3, found in Mus musculus (Mouse).